Reading from the N-terminus, the 484-residue chain is tRNA sulfurtransferase (484 aa).

In terms of domain architecture, THUMP spans 63-167; the sequence is REMIERLCCT…DQRLFVVHRQ (105 aa). ATP-binding positions include 185–186, K267, G289, and Q298; that span reads LM. C346 and C457 are joined by a disulfide. In terms of domain architecture, Rhodanese spans 405–483; sequence ALAGQIVLDI…GHANVRVYRP (79 aa). C457 (cysteine persulfide intermediate) is an active-site residue.

Belongs to the ThiI family.

Its subcellular location is the cytoplasm. It catalyses the reaction [ThiI sulfur-carrier protein]-S-sulfanyl-L-cysteine + a uridine in tRNA + 2 reduced [2Fe-2S]-[ferredoxin] + ATP + H(+) = [ThiI sulfur-carrier protein]-L-cysteine + a 4-thiouridine in tRNA + 2 oxidized [2Fe-2S]-[ferredoxin] + AMP + diphosphate. It carries out the reaction [ThiS sulfur-carrier protein]-C-terminal Gly-Gly-AMP + S-sulfanyl-L-cysteinyl-[cysteine desulfurase] + AH2 = [ThiS sulfur-carrier protein]-C-terminal-Gly-aminoethanethioate + L-cysteinyl-[cysteine desulfurase] + A + AMP + 2 H(+). It participates in cofactor biosynthesis; thiamine diphosphate biosynthesis. Functionally, catalyzes the ATP-dependent transfer of a sulfur to tRNA to produce 4-thiouridine in position 8 of tRNAs, which functions as a near-UV photosensor. Also catalyzes the transfer of sulfur to the sulfur carrier protein ThiS, forming ThiS-thiocarboxylate. This is a step in the synthesis of thiazole, in the thiamine biosynthesis pathway. The sulfur is donated as persulfide by IscS. The sequence is that of tRNA sulfurtransferase from Azotobacter vinelandii (strain DJ / ATCC BAA-1303).